The following is a 1026-amino-acid chain: MNLFNLDRFRFEKRNKIEEAPEATPQPSQPGPSSPISLSAEEENAEGEVSRANTPDSDITEKTEDSSVPETPDNERKASISYFKNQRGIQYIDLSSDSEDVVSPNCSNTVQEKTFNKDTVIIVSEPSEDEESQGLPTMARRNDDISELEDLSELEDLKDAKLQTLKELFPQRSDNDLLKLIESTSTMDGAIAAALLMFGDAGGGPRKRKLSSSSEPYEEDEFNDDQSIKKTRLDHGEESNESAESSSNWEKQESIVLKLQKEFPNFDKQELREVLKEHEWMYTEALESLKVFAEDQDMQYVSQSEVPNGKEVSSRSQNYPKNATKTKLKQKFSMKAQNGFNKKRKKNVFNPKRVVEDSEYDSGSDVGSSLDEDYSSGEEVMEDGYKGKILHFLQDASIGELTLIPQCSQKKAQKITELRPFNSWEALFTKMSKTNGLSEDLIWHCKTLIQERDVVIRLMNKCEDISNKLTKQVTMLTGNGGGWNIEQPSILNQSLSLKPYQKVGLNWLALVHKHGLNGILADEMGLGKTIQAIAFLAYLYQEGNNGPHLIVVPASTIDNWLREVNLWCPTLKVLCYYGSQEERKQIRFNIHSRYEDYNVIVTTYNCAISSSDDRSLFRRLKLNYAIFDEGHMLKNMGSIRYQHLMTINANNRLLLTGTPVQNNLLELMSLLNFVMPHMFSSSTSEIRRMFSSKTKSADEQSIYEKERIAHAKQIIKPFILRRVKEEVLKQLPPKKDRIELCAMSEKQEQLYLGLFNRLKKSINNLEKNTEMCNVMMQLRKMANHPLLHRQYYTAEKLKEMSQLMLKEPTHCEANPDLIFEDMEVMTDFELHVLCKQYRHINNFQLDMDLILDSGKFRVLGCILSELKQKGDRVVLFSQFTMMLDILEVLLKHHQHRYLRLDGKTQISERIHLIDEFNTDMDIFVFLLSTKAGGLGINLTSANVVILHDIDCNPYNDKQAEDRCHRVGQTKEVLVIKLISQGTIEESMLKINQQKLKLEQDMTTVDEGDEGSMPADIATLLKTSMGL.

Position 1 is an N-acetylmethionine (M1). The tract at residues 1–82 (MNLFNLDRFR…DNERKASISY (82 aa)) is disordered. A compositionally biased stretch (basic and acidic residues) spans 7-19 (DRFRFEKRNKIEE). T54 bears the Phosphothreonine mark. S57 is modified (phosphoserine). At T71 the chain carries Phosphothreonine. K77 is covalently cross-linked (Glycyl lysine isopeptide (Lys-Gly) (interchain with G-Cter in SUMO2)). Residue S79 is modified to Phosphoserine. K84 participates in a covalent cross-link: Glycyl lysine isopeptide (Lys-Gly) (interchain with G-Cter in SUMO2). Phosphoserine is present on residues S124, S127, S132, S146, and S152. Positions 157-199 (LKDAKLQTLKELFPQRSDNDLLKLIESTSTMDGAIAAALLMFG) constitute a CUE 1 domain. Disordered regions lie at residues 203–251 (GGPR…NWEK) and 302–328 (SQSEVPNGKEVSSRSQNYPKNATKTKL). Residues S211 and S214 each carry the phosphoserine modification. Position 217 is a phosphotyrosine (Y217). The segment covering 226-238 (QSIKKTRLDHGEE) has biased composition (basic and acidic residues). 2 positions are modified to phosphoserine: S239 and S242. Residues 251 to 294 (KQESIVLKLQKEFPNFDKQELREVLKEHEWMYTEALESLKVFAE) form the CUE 2 domain. The residue at position 302 (S302) is a Phosphoserine. Residues 314-323 (SRSQNYPKNA) are compositionally biased toward polar residues. K335 is covalently cross-linked (Glycyl lysine isopeptide (Lys-Gly) (interchain with G-Cter in SUMO2)). The tract at residues 354–373 (VVEDSEYDSGSDVGSSLDED) is disordered. K471 participates in a covalent cross-link: Glycyl lysine isopeptide (Lys-Gly) (interchain with G-Cter in SUMO2). The region spanning 509–677 (ALVHKHGLNG…MSLLNFVMPH (169 aa)) is the Helicase ATP-binding domain. 521–529 (ADEMGLGKT) contributes to the ATP binding site. Positions 628–631 (DEGH) match the DEGH box motif. Positions 721-738 (RRVKEEVLKQLPPKKDRI) match the Nuclear localization signal motif. A Glycyl lysine isopeptide (Lys-Gly) (interchain with G-Cter in SUMO2) cross-link involves residue K724. In terms of domain architecture, Helicase C-terminal spans 858–1010 (VLGCILSELK…MTTVDEGDEG (153 aa)). ATP is bound at residue 897–904 (YLRLDGKT). K996 participates in a covalent cross-link: Glycyl lysine isopeptide (Lys-Gly) (interchain with G-Cter in SUMO2). Positions 1005 to 1008 (DEGD) match the DEGD box motif.

It belongs to the SNF2/RAD54 helicase family. As to quaternary structure, binds to DNA preferentially in the vicinity of transcriptional start sites. Interacts with MSH2 and TRIM28. Part of a complex composed of TRIM28, HDAC1, HDAC2 and EHMT2. Interacts with PCNA. In terms of tissue distribution, isoform 1 is expressed ubiquitously. Isoform 3 is expressed mainly in skin and esophagus. Expressed in fibroblasts and keratinocytes (at protein level).

Its subcellular location is the nucleus. It is found in the chromosome. It catalyses the reaction ATP + H2O = ADP + phosphate + H(+). Its function is as follows. DNA helicase that possesses intrinsic ATP-dependent nucleosome-remodeling activity and is both required for DNA repair and heterochromatin organization. Promotes DNA end resection of double-strand breaks (DSBs) following DNA damage: probably acts by weakening histone DNA interactions in nucleosomes flanking DSBs. Required for the restoration of heterochromatin organization after replication. Acts at replication sites to facilitate the maintenance of heterochromatin by directing H3 and H4 histones deacetylation, H3 'Lys-9' trimethylation (H3K9me3) and restoration of silencing. In Homo sapiens (Human), this protein is SWI/SNF-related matrix-associated actin-dependent regulator of chromatin subfamily A containing DEAD/H box 1.